The following is a 169-amino-acid chain: Large ribosomal subunit protein uL5 (169 aa).

This sequence belongs to the universal ribosomal protein uL5 family. As to quaternary structure, part of the 50S ribosomal subunit; contacts the 5S rRNA and probably tRNA. Forms a bridge to the 30S subunit in the 70S ribosome.

Its function is as follows. This is one of the proteins that bind and probably mediate the attachment of the 5S RNA into the large ribosomal subunit, where it forms part of the central protuberance. In the 70S ribosome it contacts protein S13 of the 30S subunit (bridge B1b), connecting the 2 subunits; this bridge is implicated in subunit movement. May contact the P site tRNA; the 5S rRNA and some of its associated proteins might help stabilize positioning of ribosome-bound tRNAs. This is Large ribosomal subunit protein uL5 from Methanosarcina mazei (strain ATCC BAA-159 / DSM 3647 / Goe1 / Go1 / JCM 11833 / OCM 88) (Methanosarcina frisia).